The following is a 307-amino-acid chain: D-alanine--D-alanine ligase (307 aa).

The region spanning 105–304 is the ATP-grasp domain; the sequence is KMLWKGFGLP…FEQLVVKILE (200 aa). 135–190 is an ATP binding site; it reads VERLGLPLMVKPSREGSSVGLTKVNAVEELKNAVDLALTHDDTVLIEEWLSGIEMT. Mg(2+)-binding residues include Asp-258, Glu-271, and Asn-273.

This sequence belongs to the D-alanine--D-alanine ligase family. Mg(2+) serves as cofactor. It depends on Mn(2+) as a cofactor.

It is found in the cytoplasm. The enzyme catalyses 2 D-alanine + ATP = D-alanyl-D-alanine + ADP + phosphate + H(+). Its pathway is cell wall biogenesis; peptidoglycan biosynthesis. Its function is as follows. Cell wall formation. This Mannheimia succiniciproducens (strain KCTC 0769BP / MBEL55E) protein is D-alanine--D-alanine ligase.